Reading from the N-terminus, the 166-residue chain is Large ribosomal subunit protein uL18c (166 aa).

The transit peptide at 1–44 directs the protein to the chloroplast; sequence MAAATSLSFFHSTLASSSSSSVQQLSLPPKFVNFRPQTLPLIQA.

Belongs to the universal ribosomal protein uL18 family. In terms of assembly, component of the chloroplast large ribosomal subunit (LSU). Mature 70S chloroplast ribosomes of higher plants consist of a small (30S) and a large (50S) subunit. The 30S small subunit contains 1 molecule of ribosomal RNA (16S rRNA) and 24 different proteins. The 50S large subunit contains 3 rRNA molecules (23S, 5S and 4.5S rRNA) and 33 different proteins.

Its subcellular location is the plastid. It localises to the chloroplast. Functionally, component of the chloroplast ribosome (chloro-ribosome), a dedicated translation machinery responsible for the synthesis of chloroplast genome-encoded proteins, including proteins of the transcription and translation machinery and components of the photosynthetic apparatus. This is Large ribosomal subunit protein uL18c (RPL18) from Spinacia oleracea (Spinach).